We begin with the raw amino-acid sequence, 287 residues long: Elongation factor Ts (287 aa).

The involved in Mg(2+) ion dislocation from EF-Tu stretch occupies residues 79-82 (TDFV).

The protein belongs to the EF-Ts family.

It is found in the cytoplasm. Its function is as follows. Associates with the EF-Tu.GDP complex and induces the exchange of GDP to GTP. It remains bound to the aminoacyl-tRNA.EF-Tu.GTP complex up to the GTP hydrolysis stage on the ribosome. This Anaplasma phagocytophilum (strain HZ) protein is Elongation factor Ts.